We begin with the raw amino-acid sequence, 681 residues long: UvrABC system protein C (681 aa).

The region spanning 16-95 (DSPGVYKFRD…IKEYDPRFNV (80 aa)) is the GIY-YIG domain. The UVR domain maps to 208 to 243 (GTYIRRLERQMTDAAEEMEYEKAARLRDDIGALKKA). The tract at residues 650 to 681 (EIMEDEEPGTTAGSSQEPVSAGTSDERRGQET) is disordered. Over residues 660–672 (TAGSSQEPVSAGT) the composition is skewed to polar residues.

Belongs to the UvrC family. In terms of assembly, interacts with UvrB in an incision complex.

The protein localises to the cytoplasm. Its function is as follows. The UvrABC repair system catalyzes the recognition and processing of DNA lesions. UvrC both incises the 5' and 3' sides of the lesion. The N-terminal half is responsible for the 3' incision and the C-terminal half is responsible for the 5' incision. The protein is UvrABC system protein C of Streptomyces avermitilis (strain ATCC 31267 / DSM 46492 / JCM 5070 / NBRC 14893 / NCIMB 12804 / NRRL 8165 / MA-4680).